A 348-amino-acid chain; its full sequence is tRNA pseudouridine synthase D (348 aa).

Substrate is bound at residue phenylalanine 27. Aspartate 80 serves as the catalytic Nucleophile. Asparagine 129 serves as a coordination point for substrate. The TRUD domain occupies 155-303 (GVPNYFGSQR…VESARRAVLL (149 aa)). Phenylalanine 329 lines the substrate pocket.

This sequence belongs to the pseudouridine synthase TruD family.

The enzyme catalyses uridine(13) in tRNA = pseudouridine(13) in tRNA. Functionally, responsible for synthesis of pseudouridine from uracil-13 in transfer RNAs. The protein is tRNA pseudouridine synthase D of Pectobacterium carotovorum subsp. carotovorum (strain PC1).